A 425-amino-acid polypeptide reads, in one-letter code: 5'-deoxyadenosine deaminase (425 aa).

Zn(2+)-binding residues include histidine 62 and histidine 64. Residues glutamate 91 and histidine 183 each contribute to the substrate site. Zn(2+) is bound at residue histidine 210. Substrate-binding residues include glutamate 213 and aspartate 298. Zn(2+) is bound at residue aspartate 298.

This sequence belongs to the metallo-dependent hydrolases superfamily. MTA/SAH deaminase family. As to quaternary structure, homotetramer. Requires Zn(2+) as cofactor.

The enzyme catalyses 5'-deoxyadenosine + H2O + H(+) = 5'-deoxyinosine + NH4(+). The catalysed reaction is S-adenosyl-L-homocysteine + H2O + H(+) = S-inosyl-L-homocysteine + NH4(+). It catalyses the reaction S-methyl-5'-thioadenosine + H2O + H(+) = S-methyl-5'-thioinosine + NH4(+). It carries out the reaction adenosine + H2O + H(+) = inosine + NH4(+). It participates in amino-acid biosynthesis; S-adenosyl-L-methionine biosynthesis. Functionally, catalyzes the deamination of three SAM-derived enzymatic products, namely 5'-deoxyadenosine, S-adenosyl-L-homocysteine, and 5'-methylthioadenosine, to produce the inosine analogs. Can also deaminate adenosine. The preferred substrate for this enzyme is 5'-deoxyadenosine, but all these substrates are efficiently deaminated. Likely functions in a S-adenosyl-L-methionine (SAM) recycling pathway from S-adenosyl-L-homocysteine (SAH) produced from SAM-dependent methylation reactions. May also be involved in the recycling of 5'-deoxyadenosine, whereupon the 5'-deoxyribose moiety of 5'-deoxyinosine is further metabolized to deoxyhexoses used for the biosynthesis of aromatic amino acids in methanogens. This is 5'-deoxyadenosine deaminase from Methanosphaera stadtmanae (strain ATCC 43021 / DSM 3091 / JCM 11832 / MCB-3).